A 264-amino-acid chain; its full sequence is SPARC (264 aa).

Positions 1–16 (MRYALAACLLLLAASS) are cleaved as a signal peptide. The region spanning 52 to 74 (PCEDHQCGWGKECVVGKKGEPTC) is the Follistatin-like domain. Cystine bridges form between Cys-53-Cys-64, Cys-58-Cys-74, Cys-76-Cys-110, Cys-80-Cys-103, Cys-92-Cys-135, Cys-141-Cys-228, and Cys-236-Cys-252. The 70-residue stretch at 68–137 (KKGEPTCECI…HLEYLGECKK (70 aa)) folds into the Kazal-like domain. Residue Asn-96 is glycosylated (N-linked (GlcNAc...) asparagine). An EF-hand domain is found at 224-259 (PMESCIKPFLEGCDANNDGNISIKEWGKCLGLKEGE). Ca(2+) contacts are provided by Asp-237, Asn-239, Asp-241, Asn-243, and Glu-248. A glycan (N-linked (GlcNAc...) asparagine) is linked at Asn-243.

Belongs to the SPARC family. In terms of tissue distribution, expressed by body wall and sex muscle cells. Probable association with basement membranes.

It localises to the secreted. It is found in the extracellular space. The protein localises to the extracellular matrix. The protein resides in the basement membrane. Its function is as follows. Has a high affinity for collagen. Affects nematode body morphology and mobility. Essential for C.elegans development and muscle function. The cysteine-rich region could have protease inhibitory activity or may provide the framework for a protein binding module. Probable role in skeletal morphogenesis. The chain is SPARC (ost-1) from Caenorhabditis elegans.